A 547-amino-acid chain; its full sequence is MTAKDILFDADARAKLKVGVDKLANAVKVTLGPAGRNVLIDKKFGAPTSTKDGVTVAKEVELEDAIENMGAQMVREVASKTSDVAGDGTTTATVLAQAIYREGLKNVAAGARPIDLKRGIDRAVKEVVAELRTISRSISGKKEIAQVGTISANNDPEIGELIAEAMDKVGKDGVITVEEAKGMDTELKVVEGMQFDRGYLSPYFVTNSESMEAELDDALILIYDKKISNMKELLPILEKGAQSGRPLLIIAEDIEGEALATLVVNKLRGTLKVCAVKAPGFGDRRKAMLDDIAILTGGTVISEEKGYKLENATINYLGQAARVSLDKDNTTIVEGKGTQEEIKARINEIKGQIDKSTSDYDTEKLQERLAKLSGGVAVLNIGASTEVEMKEKKARVEDALHATRAAVQEGIVVGGGVALIRAIKGLDNAKPDNDDQKTGIEIIRRALEEPLRQIVANTGTTDGAVVLEHVKNGEGDYGFNARTEQYENLVEAGVVDPTKVTRSALENAASVASILLTTEACITDIKENTPDMPAMPPGGMGGMGGMY.

ATP is bound by residues 30–33, lysine 51, 87–91, glycine 415, and aspartate 496; these read TLGP and DGTTT. The interval 527–547 is disordered; it reads ENTPDMPAMPPGGMGGMGGMY. Gly residues predominate over residues 538-547; that stretch reads GGMGGMGGMY.

Belongs to the chaperonin (HSP60) family. As to quaternary structure, forms a cylinder of 14 subunits composed of two heptameric rings stacked back-to-back. Interacts with the co-chaperonin GroES.

It is found in the cytoplasm. The catalysed reaction is ATP + H2O + a folded polypeptide = ADP + phosphate + an unfolded polypeptide.. Together with its co-chaperonin GroES, plays an essential role in assisting protein folding. The GroEL-GroES system forms a nano-cage that allows encapsulation of the non-native substrate proteins and provides a physical environment optimized to promote and accelerate protein folding. The polypeptide is Chaperonin GroEL (Chlorobium phaeovibrioides (strain DSM 265 / 1930) (Prosthecochloris vibrioformis (strain DSM 265))).